The chain runs to 475 residues: Lipoprotein lipase (475 aa).

An N-terminal signal peptide occupies residues 1 to 27 (MESKALLLLALAVWLQSLTASRGGVAA). Positions 32–53 (RDFIDIESKFALRTPEDTAEDT) are interaction with GPIHBP1. Cys-54 and Cys-67 form a disulfide bridge. A glycan (N-linked (GlcNAc...) asparagine) is linked at Asn-70. Tyr-121 carries the post-translational modification 3'-nitrotyrosine. Ser-159 acts as the Nucleophile in catalysis. The active-site Charge relay system is the Asp-183. A 3'-nitrotyrosine modification is found at Tyr-191. 4 residues coordinate Ca(2+): Ala-194, Arg-197, Ser-199, and Asp-202. Cys-243 and Cys-266 form a disulfide bridge. The essential for determining substrate specificity stretch occupies residues 243-266 (CNIGEAIRVIAERGLGDVDQLVKC). His-268 functions as the Charge relay system in the catalytic mechanism. Intrachain disulfides connect Cys-291/Cys-310 and Cys-302/Cys-305. Residues 341 to 464 (FHYQVKIHFS…KGKAPAVFVK (124 aa)) enclose the PLAT domain. A 3'-nitrotyrosine modification is found at Tyr-343. Residue Asn-386 is glycosylated (N-linked (GlcNAc...) asparagine). Positions 417 to 421 (WSDWW) are important for interaction with lipoprotein particles. The important for heparin binding stretch occupies residues 430 to 434 (KIRVK). Residues 443–467 (IFCSREKVSHLQKGKAPAVFVKCHD) form an interaction with GPIHBP1 region. Cysteines 445 and 465 form a disulfide.

Belongs to the AB hydrolase superfamily. Lipase family. As to quaternary structure, homodimer. Interacts with GPIHBP1 with 1:1 stoichiometry. Interacts with APOC2; the interaction activates LPL activity in the presence of lipids. Interaction with heparan sulfate proteoglycans is required to protect LPL against loss of activity. Associates with lipoprotein particles in blood plasma. Interacts with LMF1 and SEL1L; interaction with SEL1L is required to prevent aggregation of newly synthesized LPL in the endoplasmic reticulum (ER), and for normal export of LPL from the ER to the extracellular space. Interacts with SORL1; SORL1 acts as a sorting receptor, promoting LPL localization to endosomes and later to lysosomes, leading to degradation of newly synthesized LPL. Post-translationally, tyrosine nitration after lipopolysaccharide (LPS) challenge down-regulates the lipase activity. As to expression, highest levels in the spinal cord.

It is found in the cell membrane. The protein resides in the secreted. It localises to the extracellular space. Its subcellular location is the extracellular matrix. It carries out the reaction a triacylglycerol + H2O = a diacylglycerol + a fatty acid + H(+). The enzyme catalyses a 1,2-diacyl-sn-glycero-3-phosphocholine + H2O = a 2-acyl-sn-glycero-3-phosphocholine + a fatty acid + H(+). It catalyses the reaction 1,2,3-tri-(9Z-octadecenoyl)-glycerol + H2O = di-(9Z)-octadecenoylglycerol + (9Z)-octadecenoate + H(+). The catalysed reaction is 1,2-di-(9Z-octadecenoyl)-sn-glycero-3-phosphocholine + H2O = (9Z-octadecenoyl)-sn-glycero-3-phosphocholine + (9Z)-octadecenoate + H(+). It carries out the reaction 1,2,3-tributanoylglycerol + H2O = dibutanoylglycerol + butanoate + H(+). The enzyme catalyses 1,2-dihexadecanoyl-sn-glycero-3-phosphocholine + H2O = hexadecanoyl-sn-glycero-3-phosphocholine + hexadecanoate + H(+). With respect to regulation, the apolipoprotein APOC2 acts as a coactivator of LPL activity. Ca(2+) binding promotes protein stability and formation of the active homodimer. Interaction with GPIHBP1 protects LPL against inactivation by ANGPTL4. In terms of biological role, key enzyme in triglyceride metabolism. Catalyzes the hydrolysis of triglycerides from circulating chylomicrons and very low density lipoproteins (VLDL), and thereby plays an important role in lipid clearance from the blood stream, lipid utilization and storage. Although it has both phospholipase and triglyceride lipase activities it is primarily a triglyceride lipase with low but detectable phospholipase activity. Mediates margination of triglyceride-rich lipoprotein particles in capillaries. Recruited to its site of action on the luminal surface of vascular endothelium by binding to GPIHBP1 and cell surface heparan sulfate proteoglycans. This is Lipoprotein lipase (LPL) from Papio anubis (Olive baboon).